Here is a 76-residue protein sequence, read N- to C-terminus: KANTR integral membrane protein (76 aa).

The first 25 residues, 1–25 (MSPFSLLILVICAFSLFFLINLSRG), serve as a signal peptide directing secretion. Residues 26-34 (LSILLVFTK) lie on the Extracellular side of the membrane. Residues 35–55 (NQLLALLLLSIVSLFSISLIS) traverse the membrane as a helical segment. The Cytoplasmic segment spans residues 56–76 (ALIFFDLLPSTFFGFILLLFF).

Its subcellular location is the membrane. This Mus musculus (Mouse) protein is KANTR integral membrane protein.